A 106-amino-acid polypeptide reads, in one-letter code: PAT complex subunit Asterix (106 aa).

Residues 1 to 29 are disordered; that stretch reads MSTNNMSDPRRPNKVLRYKPPPSECNPAL. Residue Ser2 is modified to N-acetylserine. The Cytoplasmic portion of the chain corresponds to 2-32; the sequence is STNNMSDPRRPNKVLRYKPPPSECNPALDDP. A helical transmembrane segment spans residues 33-51; that stretch reads TPDYMNLLGMIFSMCGLML. Position 52 (Lys52) is a topological domain, lumenal. Residues 53-70 form a helical membrane-spanning segment; it reads LKWCAWVAVYCSFISFAN. Over 71–74 the chain is Cytoplasmic; sequence SRSS. A helical membrane pass occupies residues 75-95; that stretch reads EDTKQMMSSFMLSISAVVMSY. Residues 96-106 are Lumenal-facing; that stretch reads LQNPQPMTPPW.

It belongs to the Asterix family. As to quaternary structure, component of the PAT complex, composed of WDR83OS/Asterix and CCDC47. The PAT complex is part of the multi-pass translocon (MPT) complex, composed of three subcomplexes, the GEL complex (composed of RAB5IF/OPTI and TMCO1), the BOS complex (composed of NCLN/Nicalin, NOMO1 and TMEM147) and the PAT complex (composed of WDR83OS/Asterix and CCDC47). The MPT complex associates with the SEC61 complex.

Its subcellular location is the endoplasmic reticulum membrane. Its function is as follows. Component of the multi-pass translocon (MPT) complex that mediates insertion of multi-pass membrane proteins into the lipid bilayer of membranes. The MPT complex takes over after the SEC61 complex: following membrane insertion of the first few transmembrane segments of proteins by the SEC61 complex, the MPT complex occludes the lateral gate of the SEC61 complex to promote insertion of subsequent transmembrane regions. Within the MPT complex, the PAT subcomplex sequesters any highly polar regions in the transmembrane domains away from the non-polar membrane environment until they can be buried in the interior of the fully assembled protein. Within the PAT subcomplex, WDR83OS/Asterix binds to and redirects the substrate to a location behind the SEC61 complex. The protein is PAT complex subunit Asterix (WDR83OS) of Canis lupus familiaris (Dog).